A 470-amino-acid chain; its full sequence is mRNA export factor ICP27 homolog (470 aa).

2 disordered regions span residues 1–31 (MALS…TGGD) and 62–204 (VGDP…DRLN). A compositionally biased stretch (polar residues) spans 71 to 85 (VSFSASPQRAQPSNP). Composition is skewed to basic residues over residues 94-107 (HGRR…RRNN) and 178-187 (RVHRNRRRGN). Cysteine 359, histidine 437, cysteine 441, and cysteine 446 together coordinate Zn(2+). The CHC2-type zinc-finger motif lies at 359–446 (CYLSSSGSPT…HKRRCKADTC (88 aa)).

Belongs to the HHV-1 ICP27 protein family. As to quaternary structure, homodimer. Homodimerization is required for transactivation. Associates in a complex with RNA, and host export factors NXF1/TAP and ALYREF; these interactions allow nuclear export of viral transcripts. Interacts with three host shuttling SR proteins SRSF1, SRSF3 and SRSF7. Interacts with host SRPK1. Interacts with IE62; this interaction enhances IE62 transactivation.

It is found in the host cytoplasm. It localises to the host nucleus. In terms of biological role, multifunctional regulator of the expression of viral genes that mediates nuclear export of viral intronless mRNAs. This immediate early (EI) protein promotes the nuclear export of viral intronless mRNAs by interacting with mRNAs and host NXF1/TAP. The sequence is that of mRNA export factor ICP27 homolog from Equine herpesvirus 1 (strain Ab4p) (EHV-1).